A 103-amino-acid chain; its full sequence is Phosphoribosyl-ATP pyrophosphatase (103 aa).

Belongs to the PRA-PH family.

It localises to the cytoplasm. It carries out the reaction 1-(5-phospho-beta-D-ribosyl)-ATP + H2O = 1-(5-phospho-beta-D-ribosyl)-5'-AMP + diphosphate + H(+). It functions in the pathway amino-acid biosynthesis; L-histidine biosynthesis; L-histidine from 5-phospho-alpha-D-ribose 1-diphosphate: step 2/9. The polypeptide is Phosphoribosyl-ATP pyrophosphatase (Cereibacter sphaeroides (strain KD131 / KCTC 12085) (Rhodobacter sphaeroides)).